Reading from the N-terminus, the 408-residue chain is Phosphopentomutase (408 aa).

Mn(2+) is bound by residues D10, D303, H308, D344, H345, and H356.

This sequence belongs to the phosphopentomutase family. It depends on Mn(2+) as a cofactor.

The protein resides in the cytoplasm. It carries out the reaction 2-deoxy-alpha-D-ribose 1-phosphate = 2-deoxy-D-ribose 5-phosphate. The catalysed reaction is alpha-D-ribose 1-phosphate = D-ribose 5-phosphate. Its pathway is carbohydrate degradation; 2-deoxy-D-ribose 1-phosphate degradation; D-glyceraldehyde 3-phosphate and acetaldehyde from 2-deoxy-alpha-D-ribose 1-phosphate: step 1/2. Isomerase that catalyzes the conversion of deoxy-ribose 1-phosphate (dRib-1-P) and ribose 1-phosphate (Rib-1-P) to deoxy-ribose 5-phosphate (dRib-5-P) and ribose 5-phosphate (Rib-5-P), respectively. The protein is Phosphopentomutase of Tolumonas auensis (strain DSM 9187 / NBRC 110442 / TA 4).